The sequence spans 34 residues: Toxin GTx1-15 (34 aa).

3 disulfide bridges follow: Cys2–Cys17, Cys9–Cys23, and Cys16–Cys30. Phe34 carries the post-translational modification Phenylalanine amide.

The protein belongs to the neurotoxin 10 (Hwtx-1) family. 08 (Gtx1-15) subfamily. In terms of tissue distribution, expressed by the venom gland.

The protein resides in the secreted. Its function is as follows. Potent voltage-gated sodium channel blocker. Potently inhibits the voltage-gated sodium channels Nav1.7/SCN9A (IC(50)=0.58-10 nM). Also shows a moderate activity on Nav1.1/SCN1A (IC(50)=6 nM), Nav1.2/SCN2A (IC(50)=5-128 nM), Nav1.3/SCN3A (IC(50)=20.3-170 nM), and Nav1.6/SCN8A (IC(50)=17-20.1 nM). Shows an unclear inhibition of Nav1.4/SCN4A (IC(50)=200 nM to &gt;10 uM), Nav1.5/SCN5A (IC(50)=140 nM to &gt;10 uM) and Nav1.8/SCN10A (IC(50)=68-12200 nM). Weakly blocks the low voltage-gated calcium channels Cav3.1/CACNA1G (30% inhibition of the peak current at 9.8 nM). shows moderate affinity for lipid bilayers. In vivo, when tested on the OD1-induced mouse model of Nav1.7/SCN9A-mediated pain, the toxin is effective when co-administered with OD1, but lacks efficacy when delivered systemically. In Grammostola porteri (Tarantula spider), this protein is Toxin GTx1-15.